The chain runs to 733 residues: Serine/threonine-protein kinase ATG1c (733 aa).

The region spanning 12-269 is the Protein kinase domain; sequence YLVGRQIGSG…FEEFFNHPFL (258 aa). ATP-binding positions include 18–26 and lysine 41; that span reads IGSGSFSVV. Aspartate 134 acts as the Proton acceptor in catalysis. Disordered stretches follow at residues 292-363 and 379-414; these read SSGS…ELTS and FETQINSDRRNRREPTGLTDSRSLIAPGRVDDSQDS. The span at 329-339 shows a compositional bias: polar residues; the sequence is KKTSSMKSSSG. 2 stretches are compositionally biased toward basic and acidic residues: residues 342–360 and 379–393; these read VDTRIERKEVESSPLKHTE and FETQINSDRRNRREP. The AIM (Atg8-family-interacting motif) signature appears at 419 to 422; it reads FVLV. Disordered regions lie at residues 565-596 and 713-733; these read GSPSQDINKLRSSSLKHDTHSSNKVTDLSHDG and HRRSSAGQMQGSSLAMMNRQS. The span at 566–577 shows a compositional bias: polar residues; it reads SPSQDINKLRSS. The span at 579–596 shows a compositional bias: basic and acidic residues; it reads LKHDTHSSNKVTDLSHDG. Residues 717-733 show a composition bias toward polar residues; it reads SAGQMQGSSLAMMNRQS.

The protein belongs to the protein kinase superfamily. Ser/Thr protein kinase family.

The protein localises to the cytoplasmic vesicle. It is found in the autophagosome. Functionally, serine/threonine protein kinase involved in autophagy. The ATG1-ATG13 protein kinase complex regulates downstream events required for autophagosome enclosure and/or vacuolar delivery. The sequence is that of Serine/threonine-protein kinase ATG1c from Arabidopsis thaliana (Mouse-ear cress).